A 927-amino-acid polypeptide reads, in one-letter code: Autophagy-related protein 18h (927 aa).

Disordered regions lie at residues 1-25 (MKSNSKVNINNNGDNHNQTKNNGTN) and 333-353 (DGPGPSLSSSPGRKVGRVGSH). The segment covering 335 to 344 (PGPSLSSSPG) has biased composition (low complexity). WD repeat units follow at residues 379–419 (AHTS…TKNG) and 441–482 (MTSA…NVLE). Disordered stretches follow at residues 750 to 788 (NRGFSGERDSDSSSSSDPGQVKEMHPFNGMVYPEDEERR) and 844 to 927 (IENS…SEEG). Residues 846–859 (NSSGISGDSNVSSN) show a composition bias toward low complexity. The segment covering 896–907 (ETEHKDAPSDGK) has biased composition (basic and acidic residues).

This sequence belongs to the WD repeat PROPPIN family. Component of the PI(3,5)P2 regulatory complex at least composed of ATG18, SAC/FIG4, FAB1 and VAC14. As to expression, expressed in roots, flowers and leaves.

It localises to the preautophagosomal structure membrane. The protein resides in the vacuole membrane. In terms of biological role, the PI(3,5)P2 regulatory complex regulates both the synthesis and turnover of phosphatidylinositol 3,5-bisphosphate (PtdIns(3,5)P2). Required for autophagy. This is Autophagy-related protein 18h (ATG18H) from Arabidopsis thaliana (Mouse-ear cress).